The sequence spans 193 residues: Holliday junction branch migration complex subunit RuvA (193 aa).

The tract at residues 1–63 (MIHHLKGQLI…EDSHTLYGFA (63 aa)) is domain I. Residues 64–142 (EKSEREIFRL…KVLGDDEVFV (79 aa)) form a domain II region. A flexible linker region spans residues 143–145 (SQS). The tract at residues 145 to 193 (SNTNKEEALSALEILGYNRRQAGKVVEKILKEDPESTVESIIKMALKKL) is domain III.

Belongs to the RuvA family. As to quaternary structure, homotetramer. Forms an RuvA(8)-RuvB(12)-Holliday junction (HJ) complex. HJ DNA is sandwiched between 2 RuvA tetramers; dsDNA enters through RuvA and exits via RuvB. An RuvB hexamer assembles on each DNA strand where it exits the tetramer. Each RuvB hexamer is contacted by two RuvA subunits (via domain III) on 2 adjacent RuvB subunits; this complex drives branch migration. In the full resolvosome a probable DNA-RuvA(4)-RuvB(12)-RuvC(2) complex forms which resolves the HJ.

It is found in the cytoplasm. Functionally, the RuvA-RuvB-RuvC complex processes Holliday junction (HJ) DNA during genetic recombination and DNA repair, while the RuvA-RuvB complex plays an important role in the rescue of blocked DNA replication forks via replication fork reversal (RFR). RuvA specifically binds to HJ cruciform DNA, conferring on it an open structure. The RuvB hexamer acts as an ATP-dependent pump, pulling dsDNA into and through the RuvAB complex. HJ branch migration allows RuvC to scan DNA until it finds its consensus sequence, where it cleaves and resolves the cruciform DNA. This Christiangramia forsetii (strain DSM 17595 / CGMCC 1.15422 / KT0803) (Gramella forsetii) protein is Holliday junction branch migration complex subunit RuvA.